We begin with the raw amino-acid sequence, 273 residues long: DnaJ homolog subfamily C member 27 (273 aa).

The segment at 1–18 (METNVPKRKEPAKSLRIK) is required for interaction with MAPK1. Residues 23-30 (GNAEVGKS), 71-75 (DMAGH), and 134-137 (NKID) each bind GTP. A J domain is found at 217–273 (DSWEMLGVRPGASREEVNKAYRKLAVLLHPDKCVAPGSEDAFKAVVNARTALLKNIK).

It belongs to the small GTPase superfamily. Rab family. As to quaternary structure, interacts directly with MAPK1 (wild-type and kinase-deficient forms). Interacts directly (in GTP-bound form) with MAP2K1 (wild-type and kinase-deficient forms).

It localises to the nucleus. Its function is as follows. GTPase which can activate the MEK/ERK pathway and induce cell transformation when overexpressed. May act as a nuclear scaffold for MAPK1, probably by association with MAPK1 nuclear export signal leading to enhanced ERK1/ERK2 signaling. This is DnaJ homolog subfamily C member 27 (Dnajc27) from Mus musculus (Mouse).